Consider the following 663-residue polypeptide: Ras and EF-hand domain-containing protein (663 aa).

EF-hand domains are found at residues 1–33 and 35–70; these read MNHA…CREL and VPAD…VSEA. Residues D14, N16, S18, R20, D25, D48, D50, D52, Y54, and D59 each contribute to the Ca(2+) site. Residues 122–297 are a coiled coil; the sequence is ELLLQQFEDL…LKKMVMEFQS (176 aa). Polar residues predominate over residues 324-336; sequence SQENASTKRQLSP. Residues 324–343 form a disordered region; sequence SQENASTKRQLSPRNEVLPR. GTP is bound by residues 477–482, 580–583, and 615–616; these read GSGKSS, NKVD, and AK.

It belongs to the small GTPase superfamily. Rab family. In terms of assembly, homodimer.

Its subcellular location is the cytoplasm. It localises to the perinuclear region. Binds predominantly GDP, and also GTP. The sequence is that of Ras and EF-hand domain-containing protein (rasef) from Danio rerio (Zebrafish).